Reading from the N-terminus, the 277-residue chain is NH(3)-dependent NAD(+) synthetase (277 aa).

ATP is bound at residue 36–43 (GLSGGIDS). Asp-42 serves as a coordination point for Mg(2+). Residue Arg-118 coordinates deamido-NAD(+). Thr-138 is an ATP binding site. Glu-143 lines the Mg(2+) pocket. Positions 167 and 189 each coordinate ATP.

This sequence belongs to the NAD synthetase family. Homodimer.

The catalysed reaction is deamido-NAD(+) + NH4(+) + ATP = AMP + diphosphate + NAD(+) + H(+). It participates in cofactor biosynthesis; NAD(+) biosynthesis; NAD(+) from deamido-NAD(+) (ammonia route): step 1/1. Functionally, catalyzes the ATP-dependent amidation of deamido-NAD to form NAD. Uses ammonia as a nitrogen source. The protein is NH(3)-dependent NAD(+) synthetase of Chlorobaculum tepidum (strain ATCC 49652 / DSM 12025 / NBRC 103806 / TLS) (Chlorobium tepidum).